The primary structure comprises 308 residues: GMP synthase [glutamine-hydrolyzing] subunit B (308 aa).

Positions 1–185 constitute a GMPS ATP-PPase domain; the sequence is MNWEKFVEEK…LGLPEKIYNR (185 aa). 28–34 serves as a coordination point for ATP; that stretch reads SGGVDSS.

In terms of assembly, heterodimer composed of a glutamine amidotransferase subunit (A) and a GMP-binding subunit (B).

It carries out the reaction XMP + L-glutamine + ATP + H2O = GMP + L-glutamate + AMP + diphosphate + 2 H(+). It functions in the pathway purine metabolism; GMP biosynthesis; GMP from XMP (L-Gln route): step 1/1. Its function is as follows. Catalyzes the synthesis of GMP from XMP. This Pyrococcus abyssi (strain GE5 / Orsay) protein is GMP synthase [glutamine-hydrolyzing] subunit B (guaAB).